Here is a 638-residue protein sequence, read N- to C-terminus: Keratin, type II cytoskeletal 2 oral (638 aa).

The segment at 1 to 182 (MNRQVCKKSF…DPQIGQVKAQ (182 aa)) is head. Arginine 85 and arginine 110 each carry omega-N-methylarginine. Residues 183–218 (EREQIKTLNNKFASFIDKVRFLEQQNKVLETKWELL) form a coil 1A region. Residues 183–496 (EREQIKTLNN…KLLEGEECRM (314 aa)) enclose the IF rod domain. The segment at 219–237 (QQQTTGSGPSSLEPCFESY) is linker 1. Residues 238–329 (ISFLCKQLDS…TLYEMELSQM (92 aa)) are coil 1B. A linker 12 region spans residues 330–353 (QSHASDTSVVLSMDNNRCLDLGSI). The segment at 354 to 492 (IAEVRAQYEE…ATYRKLLEGE (139 aa)) is coil 2. The tract at residues 493 to 638 (ECRMSGECQS…TSSSQHSSTK (146 aa)) is tail. The tract at residues 532 to 638 (SGSGGYKGGS…TSSSQHSSTK (107 aa)) is disordered. Over residues 540-549 (GSSSSSSSGY) the composition is skewed to low complexity. Residues 550 to 572 (GVSGGSGSGYGGVSSGSTGGRGS) show a composition bias toward gly residues. A compositionally biased stretch (low complexity) spans 573 to 583 (SGSYQSSSSGS). An Omega-N-methylarginine modification is found at arginine 584. Residues 590 to 608 (SISVSHSGMGSSSGSIQTS) are compositionally biased toward low complexity. Over residues 609–620 (GGSGYKSGGGGS) the composition is skewed to gly residues. Residues 626–638 (SQTTSSSQHSSTK) are compositionally biased toward low complexity.

Belongs to the intermediate filament family. Heterotetramer of two type I and two type II keratins.

In terms of biological role, probably contributes to terminal cornification. This is Keratin, type II cytoskeletal 2 oral (KRT76) from Homo sapiens (Human).